Here is a 129-residue protein sequence, read N- to C-terminus: Small ribosomal subunit protein uS13 (129 aa).

Residues 96-129 (GLPVRGQRTSTNARTRKGPRKTVGVSKAAAAAKA) are disordered.

It belongs to the universal ribosomal protein uS13 family. In terms of assembly, part of the 30S ribosomal subunit. Forms a loose heterodimer with protein S19. Forms two bridges to the 50S subunit in the 70S ribosome.

Its function is as follows. Located at the top of the head of the 30S subunit, it contacts several helices of the 16S rRNA. In the 70S ribosome it contacts the 23S rRNA (bridge B1a) and protein L5 of the 50S subunit (bridge B1b), connecting the 2 subunits; these bridges are implicated in subunit movement. Contacts the tRNAs in the A and P-sites. This Opitutus terrae (strain DSM 11246 / JCM 15787 / PB90-1) protein is Small ribosomal subunit protein uS13.